The sequence spans 1356 residues: Transmembrane protein 94 (1356 aa).

Over 1–64 (MDLKEKHLGE…FLHHSNRCSC (64 aa)) the chain is Cytoplasmic. Residues 65–85 (FHWPGASLMLLAVLLLLGCCG) form a helical membrane-spanning segment. Topologically, residues 86–92 (GQPAGSR) are lumenal. Residues 93–113 (GVGLVNASALFLLLLLNLVLI) form a helical membrane-spanning segment. Residues 114–273 (GRQDRLKRRE…RPVTALDNER (160 aa)) are Cytoplasmic-facing. 2 positions are modified to phosphoserine: S221 and S225. The chain crosses the membrane as a helical span at residues 274-294 (FTVQSVMLHYAVPVVLAGFLI). The Lumenal portion of the chain corresponds to 295-320 (TNALRFIFSAPGVTSWQYTLLQLQVN). Residues 321–341 (GVLPILPLLFPVLWVLATACG) form a helical membrane-spanning segment. Over 342–1092 (EARVLAQMSK…RHATYGIRKC (751 aa)) the chain is Cytoplasmic. Positions 417–422 (DKQGIL) match the DKQGIL motif. 2 disordered regions span residues 439–461 (VEPP…FCHP) and 483–541 (EQER…ESDP). Over residues 440-449 (EPPHSSHEDL) the composition is skewed to basic and acidic residues. Phosphoserine occurs at positions 444, 445, and 454. Residues 502-511 (HHKAHGRSKH) are compositionally biased toward basic residues. A phosphoserine mark is found at S513, S518, S798, and S941. The helical transmembrane segment at 1093–1113 (FLFLLQCQLTLVVIQFLSCLV) threads the bilayer. Topologically, residues 1114 to 1120 (QLPPLLS) are lumenal. Residues 1121–1141 (TTDILWLSCFCYPLLSISLLG) form a helical membrane-spanning segment. At 1142–1167 (KPPHSSIMSMATGKNLQSIPKKTQHY) the chain is on the cytoplasmic side. The helical transmembrane segment at 1168 to 1188 (FLLCFLLKFSLTISSCLICFG) threads the bilayer. The Lumenal portion of the chain corresponds to 1189–1228 (FTLQSFCDSSRDRNLTNCSSVMLPSNDDRAPAWFEDFANG). Residues N1202 and N1205 are each glycosylated (N-linked (GlcNAc...) asparagine). The helical transmembrane segment at 1229–1249 (LLSAQKLTAALIVLHTVFISI) threads the bilayer. At 1250–1261 (THVHRTKPLWRK) the chain is on the cytoplasmic side. A helical membrane pass occupies residues 1262-1282 (SPLTNLWWAVTVPVVLLGQVV). The Lumenal portion of the chain corresponds to 1283 to 1306 (QTAVDLQLWTHRDSHVHFGLEDVP). The helical transmembrane segment at 1307-1327 (LLTWLLGCLSLVLVVVTNEIV) threads the bilayer. The Cytoplasmic portion of the chain corresponds to 1328 to 1356 (KLHEIRVRVRYQKRQKLQFETKLGMNSPF). The GMN; metal-binding motif motif lies at 1351 to 1353 (GMN).

In terms of assembly, forms homooligomers. In terms of tissue distribution, expressed ubiquitously.

It is found in the endoplasmic reticulum membrane. Functionally, could function in the uptake of Mg(2+) from the cytosol into the endoplasmic reticulum and regulate intracellular Mg(2+) homeostasis. This Homo sapiens (Human) protein is Transmembrane protein 94.